The chain runs to 397 residues: Lysophospholipid transporter LplT (397 aa).

Residues M1–K17 are Periplasmic-facing. A helical transmembrane segment spans residues A18 to L38. Topologically, residues A39 to P52 are cytoplasmic. A helical transmembrane segment spans residues I53–A73. Residues D74–L90 are Periplasmic-facing. Residues L91–V111 form a helical membrane-spanning segment. Over G112–T144 the chain is Cytoplasmic. Residues I145–V165 form a helical membrane-spanning segment. A topological domain (periplasmic) is located at residue A166. A helical transmembrane segment spans residues L167–L187. At A188–S226 the chain is on the cytoplasmic side. The chain crosses the membrane as a helical span at residues L227 to L247. Residues G248–T256 are Periplasmic-facing. A helical membrane pass occupies residues Y257 to V277. At T278–E280 the chain is on the cytoplasmic side. The helical transmembrane segment at T281–L301 threads the bilayer. At Q302–E304 the chain is on the periplasmic side. A helical membrane pass occupies residues L305–P325. At L326 to A343 the chain is on the cytoplasmic side. A helical membrane pass occupies residues I344–L364. The Periplasmic segment spans residues A365–V366. The chain crosses the membrane as a helical span at residues M367–I387. Over T388–Y397 the chain is Cytoplasmic.

It belongs to the major facilitator superfamily. LplT (TC 2.A.1.42) family.

It localises to the cell inner membrane. Catalyzes the facilitated diffusion of 2-acyl-glycero-3-phosphoethanolamine (2-acyl-GPE) into the cell. This is Lysophospholipid transporter LplT from Escherichia coli O127:H6 (strain E2348/69 / EPEC).